The chain runs to 159 residues: Glutamate-rich protein GrpA (159 aa).

In Alkalihalophilus pseudofirmus (strain ATCC BAA-2126 / JCM 17055 / OF4) (Bacillus pseudofirmus), this protein is Glutamate-rich protein GrpA (grpA).